We begin with the raw amino-acid sequence, 374 residues long: 1,3,6,8-tetrahydroxynaphthalene synthase (374 aa).

Residue C138 is part of the active site.

This sequence belongs to the thiolase-like superfamily. Chalcone/stilbene synthases family. As to quaternary structure, homodimer.

The enzyme catalyses 5 malonyl-CoA + 5 H(+) = naphthalene-1,3,6,8-tetrol + 5 CO2 + 5 CoA + H2O. The protein operates within pigment biosynthesis; melanin biosynthesis. Functionally, involved in the biosynthesis of melanin but also various secondary metabolites containing a naphthoquinone ring. Catalyzes the iterative condensation of five CoA-linked malonyl units to form a pentaketide intermediate. THNS subsequently catalyzes the dual intramolecular Claisen and aldol condensations of this linear intermediate to produce the fused ring of 1,3,6,8-tetrahydroxynaphthalene (THN). This is 1,3,6,8-tetrahydroxynaphthalene synthase from Streptomyces coelicolor (strain ATCC BAA-471 / A3(2) / M145).